Here is a 60-residue protein sequence, read N- to C-terminus: U20-myrmicitoxin-Mri1a (60 aa).

The first 24 residues, 1–24 (MKSVILLFAVIAIIVAVIIPAING), serve as a signal peptide directing secretion. The propeptide occupies 25–34 (ESSSNPSANA).

The protein belongs to the formicidae venom precursor-01 superfamily. Expressed by the venom gland.

The protein resides in the secreted. In terms of biological role, induces paralysis 5 minutes after injection into blowflies (L.caesar), and then death within 24 hours. May have antimicrobial properties, like most ant linear peptides. This Manica rubida (European giant red ant) protein is U20-myrmicitoxin-Mri1a.